A 78-amino-acid polypeptide reads, in one-letter code: Neurotoxin 3FTx-LK (78 aa).

Residues Met-1 to Thr-21 form the signal peptide. 4 disulfide bridges follow: Cys-24–Cys-42, Cys-35–Cys-60, Cys-64–Cys-70, and Cys-71–Cys-76.

Expressed by the venom gland.

It localises to the secreted. Blocks both the muscle-twitch response to nerve stimulation and the response to exogenous acetylcholine. This is Neurotoxin 3FTx-LK from Bungarus fasciatus (Banded krait).